The sequence spans 378 residues: Putative odorant receptor 71a (378 aa).

At 1 to 37 (MDYDRIRPVRFLTGVLKWWRLWPRKESVSTPDWTNWQ) the chain is on the cytoplasmic side. A helical membrane pass occupies residues 38 to 58 (AYALHVPFTFLFVLLLWLEAI). The Extracellular segment spans residues 59-66 (KSRDIQHT). A helical transmembrane segment spans residues 67 to 87 (ADVLLICLTTTALGGKVINIW). The Cytoplasmic segment spans residues 88–127 (KYAHVAQGILSEWSTWDLFELRSKQEVDMWRFEHRRFNRV). The chain crosses the membrane as a helical span at residues 128–148 (FMFYCLCSAGVIPFIVIQPLF). The Extracellular portion of the chain corresponds to 149 to 166 (DIPNRLPFWMWTPFDWQQ). The helical transmembrane segment at 167–187 (PVLFWYAFIYQATTIPIACAC) threads the bilayer. Residues 188–255 (NVTMDAVNWY…IFISKSTFTQ (68 aa)) lie on the Cytoplasmic side of the membrane. Residues 256–276 (ILVSSLIICFTIYSMQMSPVL) traverse the membrane as a helical segment. Over 277–280 (QDLP) the chain is Extracellular. The helical transmembrane segment at 281-301 (GFAAMMQYLVAMIMQVMLPTI) threads the bilayer. Residues 302-343 (YGNAVIDSANMLTDSMYNSDWPDMNCRMRRLVLMFMVYLNRP) are Cytoplasmic-facing. A helical membrane pass occupies residues 344 to 364 (VTLKAGGFFHIGLPLFTKTMN). Residues 365-378 (QAYSLLALLLNMNQ) lie on the Extracellular side of the membrane.

The protein belongs to the insect chemoreceptor superfamily. Heteromeric odorant receptor channel (TC 1.A.69) family. Or2a subfamily. As to quaternary structure, interacts with Orco. Complexes exist early in the endomembrane system in olfactory sensory neurons (OSNs), coupling these complexes to the conserved ciliary trafficking pathway. Expressed in olfactory sensory neurons in the maxillary palp.

Its subcellular location is the cell membrane. Functionally, odorant receptor which mediates acceptance or avoidance behavior, depending on its substrates. The odorant receptor repertoire encodes a large collection of odor stimuli that vary widely in identity, intensity, and duration. May form a complex with Orco to form odorant-sensing units, providing sensitive and prolonged odorant signaling and calcium permeability. The sequence is that of Putative odorant receptor 71a (Or71a) from Drosophila melanogaster (Fruit fly).